A 363-amino-acid chain; its full sequence is MSGNTYGKLFTVTTAGESHGPALVAIVDGCPPGLEISLADLQHDLDRRKPGTSRHTTQRQEADEVEILSGVFEGRTTGCSIGLLIRNTDQKSKDYSAIKDLFRPAHADYTYHHKYGVRDYRGGGRSSARETAMRVAAGAIAKKYLASQGITVRGYMSQLGPIEIPFKTWESVEQNAFFSPDPDKVPELEAYMDQLRRDQDSVGAKITVVAEGVMPGLGEPIFDRLDAELAHALMSINAVKGVEIGAGFASVAQRGTEHRDELTPQGFLSNNAGGILGGISSGQPIVAHLALKPTSSITTPGRSIDIDGNPVDVITKGRHDPCVGIRATPIAEAMMAIALMDHLLRHRAQNADVKVNTPVLGQL.

NADP(+) contacts are provided by Arg48 and Arg54. FMN is bound by residues 125-127, 237-238, Gly277, 292-296, and Arg318; these read RSS, NA, and KPTSS.

It belongs to the chorismate synthase family. As to quaternary structure, homotetramer. FMNH2 is required as a cofactor.

The catalysed reaction is 5-O-(1-carboxyvinyl)-3-phosphoshikimate = chorismate + phosphate. The protein operates within metabolic intermediate biosynthesis; chorismate biosynthesis; chorismate from D-erythrose 4-phosphate and phosphoenolpyruvate: step 7/7. In terms of biological role, catalyzes the anti-1,4-elimination of the C-3 phosphate and the C-6 proR hydrogen from 5-enolpyruvylshikimate-3-phosphate (EPSP) to yield chorismate, which is the branch point compound that serves as the starting substrate for the three terminal pathways of aromatic amino acid biosynthesis. This reaction introduces a second double bond into the aromatic ring system. This Pseudomonas putida (strain GB-1) protein is Chorismate synthase.